Reading from the N-terminus, the 292-residue chain is Enoyl-CoA hydratase domain-containing protein 2, mitochondrial (292 aa).

Residues 1–35 constitute a mitochondrion transit peptide; it reads MLRVLCLLRPWRPLRARGCASDGAAGGSEIQVRAL. Lys97 carries the post-translational modification N6-acetyllysine; alternate. Lys97 is subject to N6-succinyllysine; alternate.

Belongs to the enoyl-CoA hydratase/isomerase family.

It localises to the mitochondrion. The protein is Enoyl-CoA hydratase domain-containing protein 2, mitochondrial (ECHDC2) of Homo sapiens (Human).